The chain runs to 43 residues: Protein PsbN (43 aa).

A helical transmembrane segment spans residues 5–27 (TLIAISISGLIVSFTGYALYTAF).

Belongs to the PsbN family.

The protein localises to the plastid. It localises to the chloroplast thylakoid membrane. Functionally, may play a role in photosystem I and II biogenesis. The sequence is that of Protein PsbN from Cicer arietinum (Chickpea).